The sequence spans 589 residues: Probable 9-cis-epoxycarotenoid dioxygenase NCED5, chloroplastic (589 aa).

The N-terminal 45 residues, 1–45, are a transit peptide targeting the chloroplast; that stretch reads MACSYILTPNPTKLNLSFAPSDLDAPSPSSSVSFTNTKPRRRKLS. Residues 21–34 are compositionally biased toward low complexity; the sequence is SDLDAPSPSSSVSF. Positions 21–51 are disordered; the sequence is SDLDAPSPSSSVSFTNTKPRRRKLSANSVSD. Fe cation is bound by residues His-287, His-336, His-401, and His-576.

It belongs to the carotenoid oxygenase family. In terms of assembly, interacts in vitro with VAR3. The cofactor is Fe(2+). Detected only in seeds.

The protein resides in the plastid. It is found in the chloroplast thylakoid membrane. The enzyme catalyses a 9-cis-epoxycarotenoid + O2 = a 12'-apo-carotenal + 2-cis,4-trans-xanthoxin. The catalysed reaction is 9-cis-violaxanthin + O2 = (3S,5R,6S)-5,6-epoxy-3-hydroxy-5,6-dihydro-12'-apo-beta-caroten-12'-al + 2-cis,4-trans-xanthoxin. It carries out the reaction 9'-cis-neoxanthin + O2 = (3S,5R,6R)-3,5-dihydroxy-6,7-didehydro-5,6-dihydro-12'-apo-beta-caroten-12'-al + 2-cis,4-trans-xanthoxin. Has a 11,12(11',12') 9-cis epoxycarotenoid cleavage activity. Catalyzes the first step of abscisic-acid biosynthesis from carotenoids. The sequence is that of Probable 9-cis-epoxycarotenoid dioxygenase NCED5, chloroplastic (NCED5) from Arabidopsis thaliana (Mouse-ear cress).